The sequence spans 113 residues: MLILKRIFIIRNFIFPFSNCRYASTVPSPRSGISNTNDFFKRIGRDTAEKVNGKFESWDGLFRKSTKTMKKEGIDVRTRKYIASQRNRFKEGFIVKPYPVMVKKNGGERRKRK.

The N-terminal 22 residues, 1–22 (MLILKRIFIIRNFIFPFSNCRY), are a transit peptide targeting the mitochondrion.

Belongs to the mitochondrion-specific ribosomal protein mS41 family. Component of the mitochondrial small ribosomal subunit (mt-SSU). Mature yeast 74S mitochondrial ribosomes consist of a small (37S) and a large (54S) subunit. The 37S small subunit contains a 15S ribosomal RNA (15S mt-rRNA) and at least 32 different proteins. The 54S large subunit contains a 21S rRNA (21S mt-rRNA) and at least 45 different proteins.

The protein localises to the mitochondrion. Functionally, component of the mitochondrial ribosome (mitoribosome), a dedicated translation machinery responsible for the synthesis of mitochondrial genome-encoded proteins, including at least some of the essential transmembrane subunits of the mitochondrial respiratory chain. The mitoribosomes are attached to the mitochondrial inner membrane and translation products are cotranslationally integrated into the membrane. mS41 is involved in telomere length regulation. The sequence is that of Small ribosomal subunit protein mS41 (fyv4) from Schizosaccharomyces pombe (strain 972 / ATCC 24843) (Fission yeast).